The following is a 428-amino-acid chain: Divalent metal cation transporter MntH (428 aa).

Transmembrane regions (helical) follow at residues 33-53 (WYLL…GNVA), 60-80 (AQFG…AALV), 114-134 (QAEI…AIAL), 136-156 (IMFN…SLLL), 171-191 (VITA…FVVT), 210-230 (SVLL…VYLH), 258-278 (VGLA…VAAL), 299-319 (TLGA…GLAS), 334-356 (LLHW…LAIL), 365-385 (TLVL…LPLV), and 406-426 (VGWV…YLTV).

Belongs to the NRAMP family.

It localises to the cell membrane. H(+)-stimulated, divalent metal cation uptake system. Transports zinc and iron. Can also interact with manganese and copper. The polypeptide is Divalent metal cation transporter MntH (Mycobacterium tuberculosis (strain CDC 1551 / Oshkosh)).